We begin with the raw amino-acid sequence, 428 residues long: D-amino acid dehydrogenase (428 aa).

3–17 (VVVLGSGVVGVTSAY) lines the FAD pocket.

Belongs to the DadA oxidoreductase family. Requires FAD as cofactor.

The catalysed reaction is a D-alpha-amino acid + A + H2O = a 2-oxocarboxylate + AH2 + NH4(+). It functions in the pathway amino-acid degradation; D-alanine degradation; NH(3) and pyruvate from D-alanine: step 1/1. Its function is as follows. Oxidative deamination of D-amino acids. In Paraburkholderia phytofirmans (strain DSM 17436 / LMG 22146 / PsJN) (Burkholderia phytofirmans), this protein is D-amino acid dehydrogenase.